We begin with the raw amino-acid sequence, 157 residues long: Crossover junction endodeoxyribonuclease RuvC (157 aa).

Active-site residues include Asp7, Glu67, and Asp140. The Mg(2+) site is built by Asp7, Glu67, and Asp140.

The protein belongs to the RuvC family. Homodimer which binds Holliday junction (HJ) DNA. The HJ becomes 2-fold symmetrical on binding to RuvC with unstacked arms; it has a different conformation from HJ DNA in complex with RuvA. In the full resolvosome a probable DNA-RuvA(4)-RuvB(12)-RuvC(2) complex forms which resolves the HJ. Mg(2+) serves as cofactor.

The protein localises to the cytoplasm. It catalyses the reaction Endonucleolytic cleavage at a junction such as a reciprocal single-stranded crossover between two homologous DNA duplexes (Holliday junction).. Functionally, the RuvA-RuvB-RuvC complex processes Holliday junction (HJ) DNA during genetic recombination and DNA repair. Endonuclease that resolves HJ intermediates. Cleaves cruciform DNA by making single-stranded nicks across the HJ at symmetrical positions within the homologous arms, yielding a 5'-phosphate and a 3'-hydroxyl group; requires a central core of homology in the junction. The consensus cleavage sequence is 5'-(A/T)TT(C/G)-3'. Cleavage occurs on the 3'-side of the TT dinucleotide at the point of strand exchange. HJ branch migration catalyzed by RuvA-RuvB allows RuvC to scan DNA until it finds its consensus sequence, where it cleaves and resolves the cruciform DNA. The polypeptide is Crossover junction endodeoxyribonuclease RuvC (Rickettsia akari (strain Hartford)).